The sequence spans 1386 residues: DNA-directed RNA polymerase subunit beta'' (1386 aa).

Positions 224, 294, 301, and 304 each coordinate Zn(2+).

Belongs to the RNA polymerase beta' chain family. RpoC2 subfamily. In plastids the minimal PEP RNA polymerase catalytic core is composed of four subunits: alpha, beta, beta', and beta''. When a (nuclear-encoded) sigma factor is associated with the core the holoenzyme is formed, which can initiate transcription. Zn(2+) serves as cofactor.

Its subcellular location is the plastid. It is found in the chloroplast. It carries out the reaction RNA(n) + a ribonucleoside 5'-triphosphate = RNA(n+1) + diphosphate. Its function is as follows. DNA-dependent RNA polymerase catalyzes the transcription of DNA into RNA using the four ribonucleoside triphosphates as substrates. The protein is DNA-directed RNA polymerase subunit beta'' of Acorus calamus (Sweet flag).